The sequence spans 269 residues: MASNLPMSPQLEQIHGEIRDHFRALANGFQRLDKIKDSTRQSKQLEELTDKMRECKRLVKEFDRELKDEEARNSPEVNKQLNDEKQSMIKELNSYVALRKTYMSTLGNKKVELFDMGAGVSGEPTAEENVQVASSMSNQELVDAGMKRMDETDQAIERSKQVVEQTLEVGTQTAANLKGQTDQMGRVVNHLDTIQFSIKKASQLVKEIGRQVATDKCIMGFLFLIVCGVVAIIIVKIVNPNNKDIRDIPGLAPPAQSRKLLYLRNQDYM.

Over 1–217 (MASNLPMSPQ…IGRQVATDKC (217 aa)) the chain is Cytoplasmic. A coiled-coil region spans residues 33 to 94 (DKIKDSTRQS…KQSMIKELNS (62 aa)). Position 74 is a phosphoserine (Ser-74). One can recognise a t-SNARE coiled-coil homology domain in the interval 146–208 (MKRMDETDQA…KKASQLVKEI (63 aa)). The chain crosses the membrane as a helical; Anchor for type IV membrane protein span at residues 218–238 (IMGFLFLIVCGVVAIIIVKIV). The Vesicular segment spans residues 239 to 269 (NPNNKDIRDIPGLAPPAQSRKLLYLRNQDYM).

It belongs to the novel plant SNARE family.

It localises to the membrane. Its function is as follows. Vesicle trafficking protein that functions in the secretory pathway. The chain is Novel plant SNARE 13 (NPSN13) from Arabidopsis thaliana (Mouse-ear cress).